The primary structure comprises 160 residues: uncharacterized protein (160 aa).

The protein localises to the cytoplasm. The protein resides in the nucleus. This is an uncharacterized protein from Schizosaccharomyces pombe (strain 972 / ATCC 24843) (Fission yeast).